Here is a 111-residue protein sequence, read N- to C-terminus: Flagellar hook-basal body complex protein FliE (111 aa).

It belongs to the FliE family.

It is found in the bacterial flagellum basal body. This is Flagellar hook-basal body complex protein FliE from Brucella ovis (strain ATCC 25840 / 63/290 / NCTC 10512).